Here is a 903-residue protein sequence, read N- to C-terminus: DNA mismatch repair protein MutS (903 aa).

The tract at residues 1 to 89 (MPRSASQPPD…DEPAWGHHSQ (89 aa)) is disordered. Low complexity-rich tracts occupy residues 20–36 (APEP…SEPE) and 49–62 (ADAA…QATA). ATP is bound at residue 719-726 (GPNASGKS).

It belongs to the DNA mismatch repair MutS family.

Functionally, this protein is involved in the repair of mismatches in DNA. It is possible that it carries out the mismatch recognition step. This protein has a weak ATPase activity. The sequence is that of DNA mismatch repair protein MutS from Synechococcus sp. (strain CC9605).